The sequence spans 123 residues: MAPPKPSAKGAKKAAKTVTKPKDGKKRRHARKESYSVYIYRVLKQVHPDTGVSSKAMSIMNSFVNDVFERIAAEASRLAHYNKRSTISSREIQTAVRLILPGELAKHAVSEGTKAVTKYTSSK.

The segment at 1 to 32 is disordered; that stretch reads MAPPKPSAKGAKKAAKTVTKPKDGKKRRHARK. Residue Ser110 is glycosylated (O-linked (GlcNAc) serine). Lys118 is covalently cross-linked (Glycyl lysine isopeptide (Lys-Gly) (interchain with G-Cter in ubiquitin)).

This sequence belongs to the histone H2B family. The nucleosome is a histone octamer containing two molecules each of H2A, H2B, H3 and H4 assembled in one H3-H4 heterotetramer and two H2A-H2B heterodimers. The octamer wraps approximately 147 bp of DNA. In terms of processing, monoubiquitination of Lys-118 gives a specific tag for epigenetic transcriptional activation and is also prerequisite for histone H3 'Lys-4' and 'Lys-79' methylation. GlcNAcylation at Ser-110 promotes monoubiquitination of Lys-118. It fluctuates in response to extracellular glucose, and associates with transcribed genes.

Its subcellular location is the nucleus. It is found in the chromosome. Core component of nucleosome. Nucleosomes wrap and compact DNA into chromatin, limiting DNA accessibility to the cellular machineries which require DNA as a template. Histones thereby play a central role in transcription regulation, DNA repair, DNA replication and chromosomal stability. DNA accessibility is regulated via a complex set of post-translational modifications of histones, also called histone code, and nucleosome remodeling. This chain is Histone H2B 2 (his-4), found in Caenorhabditis elegans.